The chain runs to 1181 residues: HEAT repeat-containing protein 6 (1181 aa).

Residues 159–198 (LELLGETGLLMKLSDLAQSDPEVRRAAVHCMANLCLSVPG) form an HEAT 1 repeat. 2 disordered regions span residues 294-347 (DGRT…PVTG) and 371-407 (LDGS…AEGG). The segment covering 300-312 (KPQQSESSASRPT) has biased composition (polar residues). Residues 313-325 (LNKKKKSKVKPKK) are compositionally biased toward basic residues. A phosphoserine mark is found at S336, S337, S399, and S402. The segment covering 383–399 (SSPFSSSSWKRVSSSES) has biased composition (low complexity). HEAT repeat units lie at residues 452 to 490 (ELGS…GSKQ), 514 to 552 (SSIR…DAPY), and 558 to 595 (SLLT…THAP). The segment at 613–648 (NSNSATPHLSPPDWWKKAPAGPSLEETSVSSPKGSS) is disordered. At T618 the chain carries Phosphothreonine. Over residues 637 to 646 (EETSVSSPKG) the composition is skewed to polar residues. S643 is subject to Phosphoserine.

The chain is HEAT repeat-containing protein 6 (HEATR6) from Pongo abelii (Sumatran orangutan).